Reading from the N-terminus, the 157-residue chain is SsrA-binding protein (157 aa).

The segment at 133 to 157 (LHDKRETEKKRDWSREKSRLLRARG) is disordered. A compositionally biased stretch (basic and acidic residues) spans 135 to 151 (DKRETEKKRDWSREKSR).

It belongs to the SmpB family.

It is found in the cytoplasm. Required for rescue of stalled ribosomes mediated by trans-translation. Binds to transfer-messenger RNA (tmRNA), required for stable association of tmRNA with ribosomes. tmRNA and SmpB together mimic tRNA shape, replacing the anticodon stem-loop with SmpB. tmRNA is encoded by the ssrA gene; the 2 termini fold to resemble tRNA(Ala) and it encodes a 'tag peptide', a short internal open reading frame. During trans-translation Ala-aminoacylated tmRNA acts like a tRNA, entering the A-site of stalled ribosomes, displacing the stalled mRNA. The ribosome then switches to translate the ORF on the tmRNA; the nascent peptide is terminated with the 'tag peptide' encoded by the tmRNA and targeted for degradation. The ribosome is freed to recommence translation, which seems to be the essential function of trans-translation. This Afipia carboxidovorans (strain ATCC 49405 / DSM 1227 / KCTC 32145 / OM5) (Oligotropha carboxidovorans) protein is SsrA-binding protein.